The chain runs to 264 residues: Transmembrane protein 270 (264 aa).

Helical transmembrane passes span 31–51, 74–94, and 133–153; these read HLYRFLLLKMAIFQHWVLGLA, LSLALRAGLTLLWVPMWLLLW, and LFLSCLHSLMLVALLLLLLTW. The span at 227–236 shows a compositional bias: polar residues; the sequence is AQEVKSQETS. A disordered region spans residues 227–264; it reads AQEVKSQETSGPPPQFLIPESSTTESGPLPPQPETPGE. The segment covering 254–264 has biased composition (pro residues); the sequence is PLPPQPETPGE.

Testis.

The protein localises to the membrane. The sequence is that of Transmembrane protein 270 from Mus musculus (Mouse).